A 333-amino-acid polypeptide reads, in one-letter code: Casein kinase II subunit alpha-2 (333 aa).

The Protein kinase domain maps to 34 to 319; sequence YEVVRKVGRG…AREAMAHPYF (286 aa). ATP contacts are provided by residues 40–48 and Lys63; that span reads VGRGKYSEV. The Proton acceptor role is filled by Asp151.

The protein belongs to the protein kinase superfamily. Ser/Thr protein kinase family. CK2 subfamily. In terms of assembly, monomer. Autophosphorylated.

It localises to the cytoplasm. It catalyses the reaction L-seryl-[protein] + ATP = O-phospho-L-seryl-[protein] + ADP + H(+). The catalysed reaction is L-threonyl-[protein] + ATP = O-phospho-L-threonyl-[protein] + ADP + H(+). In terms of biological role, casein kinases are operationally defined by their preferential utilization of acidic proteins such as caseins as substrates. It can phosphorylate a large number of proteins. Involved in photoperiod sensitivity (PS). Increases days-to-heading under natural day (ND) and long day (LD) conditions, but not under short day (SD) conditions. The protein is Casein kinase II subunit alpha-2 of Oryza sativa subsp. indica (Rice).